The sequence spans 333 residues: MKPFPTHPDAIPAELQDVMDRLGTVAIEVANRIARGGIDEDLAGLCGTNTDGDGQKALDVIADDAFRAALEGSAVRFYASEEQDTAVTLNEAGTLALAIDPLDGSSNIDTNLSVGTIFAIWPAAATAEASFLRQGSELIAAGYVIYGPQVCMMVSFGKGTQKYVLDPGSRSFVLVDRAVKVPPSSTEFAINASNYRHWPKPIRAYIDDCVAGTEGPRGRNFNMRWLASLVAETHRILARGGVFLYPRDSRKGYEQGRLRYLYECAPIAFVITQAGGGATDGENPILGQTPSRLHARTPFVFGSAEKVARITAYHDLPEQETSALFGNRGLFRS.

4 residues coordinate Mg(2+): Glu81, Asp100, Leu102, and Asp103. Substrate contacts are provided by residues 103 to 106 (DGSS) and Asn191. Residue Glu263 participates in Mg(2+) binding.

It belongs to the FBPase class 1 family. In terms of assembly, homotetramer. Mg(2+) is required as a cofactor.

It is found in the cytoplasm. The enzyme catalyses beta-D-fructose 1,6-bisphosphate + H2O = beta-D-fructose 6-phosphate + phosphate. Its pathway is carbohydrate biosynthesis; Calvin cycle. This Cereibacter sphaeroides (strain ATCC 17029 / ATH 2.4.9) (Rhodobacter sphaeroides) protein is Fructose-1,6-bisphosphatase class 1 1.